Here is a 246-residue protein sequence, read N- to C-terminus: MGKRILVQRRGRGGSQFRSPSWKRDGPVRYPPLNVTVGRGYVVEILHEPGLNAPVARIRLENGVEFLNFAAEGLYVGQEIEVGDLAAPKTGNIVILGRVPEGTMVFNVEKRAGDGGKFARAGGTYAVVVGQKPEENKTIIRLPSGKVVEVDSRGRATVGIVAGGGRIEKPFLKAGKKYHRAKAKAWKYPTVRGKAMSPYAHPHGGGSHPKGGTPVPKTAPPGQKVGFYGSRCTGRGCVRARAQQKL.

The disordered stretch occupies residues 197-226; that stretch reads SPYAHPHGGGSHPKGGTPVPKTAPPGQKVG.

Belongs to the universal ribosomal protein uL2 family. Part of the 50S ribosomal subunit. Forms a bridge to the 30S subunit in the 70S ribosome.

Its function is as follows. One of the primary rRNA binding proteins. Required for association of the 30S and 50S subunits to form the 70S ribosome, for tRNA binding and peptide bond formation. It has been suggested to have peptidyltransferase activity; this is somewhat controversial. Makes several contacts with the 16S rRNA in the 70S ribosome. The chain is Large ribosomal subunit protein uL2 from Pyrobaculum islandicum (strain DSM 4184 / JCM 9189 / GEO3).